The chain runs to 460 residues: Mitochondrial distribution and morphology protein 34 (460 aa).

The region spanning 1 to 196 is the SMP-LTD domain; the sequence is MSFKFDWESL…LPGIIHRLSQ (196 aa). Over residues 304–321 the composition is skewed to basic residues; it reads HNHQAPKRRTIKYKRKSK. Disordered regions lie at residues 304–356 and 368–460; these read HNHQ…PSRE and EPSS…AYSG. 2 stretches are compositionally biased toward low complexity: residues 330–355 and 393–405; these read STEV…TPSR and SPPS…DTSL.

Belongs to the MDM34 family. As to quaternary structure, component of the ER-mitochondria encounter structure (ERMES) or MDM complex, composed of MMM1, MDM10, MDM12 and MDM34.

It is found in the mitochondrion outer membrane. Its function is as follows. Component of the ERMES/MDM complex, which serves as a molecular tether to connect the endoplasmic reticulum (ER) and mitochondria. Components of this complex are involved in the control of mitochondrial shape and protein biogenesis, and function in nonvesicular lipid trafficking between the ER and mitochondria. MDM34 is required for the interaction of the ER-resident membrane protein MMM1 and the outer mitochondrial membrane-resident beta-barrel protein MDM10. The protein is Mitochondrial distribution and morphology protein 34 of Yarrowia lipolytica (strain CLIB 122 / E 150) (Yeast).